The primary structure comprises 283 residues: Pantothenate synthetase (283 aa).

An ATP-binding site is contributed by 26–33 (MGNLHEGH). H33 serves as the catalytic Proton donor. (R)-pantoate is bound at residue Q57. A beta-alanine-binding site is contributed by Q57. 144–147 (GKKD) is a binding site for ATP. Q150 lines the (R)-pantoate pocket. ATP contacts are provided by residues V173 and 181–184 (LSSR).

It belongs to the pantothenate synthetase family. In terms of assembly, homodimer.

It localises to the cytoplasm. The enzyme catalyses (R)-pantoate + beta-alanine + ATP = (R)-pantothenate + AMP + diphosphate + H(+). It functions in the pathway cofactor biosynthesis; (R)-pantothenate biosynthesis; (R)-pantothenate from (R)-pantoate and beta-alanine: step 1/1. Catalyzes the condensation of pantoate with beta-alanine in an ATP-dependent reaction via a pantoyl-adenylate intermediate. The polypeptide is Pantothenate synthetase (Ralstonia nicotianae (strain ATCC BAA-1114 / GMI1000) (Ralstonia solanacearum)).